Here is a 265-residue protein sequence, read N- to C-terminus: Lipopolysaccharide core heptose(I) kinase WaaP (265 aa).

The active site involves D162.

Belongs to the protein kinase superfamily. KdkA/RfaP family. Mg(2+) is required as a cofactor.

The protein localises to the cell inner membrane. The catalysed reaction is an L-alpha-D-Hep-(1-&gt;3)-L-alpha-D-Hep-(1-&gt;5)-[alpha-Kdo-(2-&gt;4)]-alpha-Kdo-(2-&gt;6)-lipid A + ATP = an L-alpha-D-Hep-(1-&gt;3)-4-O-phospho-L-alpha-D-Hep-(1-&gt;5)-[alpha-Kdo-(2-&gt;4)]-alpha-Kdo-(2-&gt;6)-lipid A + ADP + H(+). It carries out the reaction L-alpha-D-Hep-(1-&gt;3)-L-alpha-D-Hep-(1-&gt;5)-[alpha-Kdo-(2-&gt;4)]-alpha-Kdo-(2-&gt;6)-lipid A (E. coli) + ATP = L-alpha-D-Hep-(1-&gt;3)-4-O-phospho-L-alpha-D-Hep-(1-&gt;5)-[alpha-Kdo-(2-&gt;4)]-alpha-Kdo-(2-&gt;6)-lipid A (E. coli) + ADP + H(+). It functions in the pathway bacterial outer membrane biogenesis; LPS core biosynthesis. Functionally, kinase involved in the biosynthesis of the core oligosaccharide region of lipopolysaccharide (LPS). Catalyzes the phosphorylation of heptose I (HepI), the first heptose added to the Kdo2-lipid A module. This is Lipopolysaccharide core heptose(I) kinase WaaP from Escherichia coli.